A 129-amino-acid polypeptide reads, in one-letter code: Succinate dehydrogenase subunit 3-1, mitochondrial (129 aa).

A mitochondrion-targeting transit peptide spans 1–58 (MEKYHSNSRFAPFRDAPFALRGALGSSGSSFSSIDSLRRSSTLEQARGYTSRPLGAVR). Low complexity predominate over residues 25 to 35 (GSSGSSFSSID). Residues 25 to 80 (GSSGSSFSSIDSLRRSSTLEQARGYTSRPLGAVRPKMLPSGCRPLHTSHPLSAPVA) form a disordered region. Residue histidine 87 coordinates heme. A helical membrane pass occupies residues 105 to 127 (IFGAALGAAIISIPLATKFSLMF).

Component of complex II composed of eight subunits in plants: four classical SDH subunits SDH1, SDH2, SDH3 and SDH4 (a flavoprotein (FP), an iron-sulfur protein (IP), and a cytochrome b composed of a large and a small subunit.), as well as four subunits unknown in mitochondria from bacteria and heterotrophic eukaryotes. Heme is required as a cofactor.

It localises to the mitochondrion inner membrane. It participates in carbohydrate metabolism; tricarboxylic acid cycle. Functionally, membrane-anchoring subunit of succinate dehydrogenase (SDH). In Oryza sativa subsp. japonica (Rice), this protein is Succinate dehydrogenase subunit 3-1, mitochondrial.